Here is a 148-residue protein sequence, read N- to C-terminus: uncharacterized protein (148 aa).

The region spanning 4–65 (LDRVDMQLVK…IPDIDKLGYM (62 aa)) is the HTH asnC-type domain. Positions 23–42 (YRELADILNTTRQRIARRID) form a DNA-binding region, H-T-H motif.

This is an uncharacterized protein from Pyrococcus horikoshii (strain ATCC 700860 / DSM 12428 / JCM 9974 / NBRC 100139 / OT-3).